Here is a 539-residue protein sequence, read N- to C-terminus: Chaperonin GroEL 1 (539 aa).

ATP is bound by residues 29 to 32 (TLGP), 86 to 90 (DGTTT), Gly-413, 478 to 480 (NAA), and Asp-494.

This sequence belongs to the chaperonin (HSP60) family. As to quaternary structure, forms a cylinder of 14 subunits composed of two heptameric rings stacked back-to-back. Interacts with the co-chaperonin GroES.

It is found in the cytoplasm. It carries out the reaction ATP + H2O + a folded polypeptide = ADP + phosphate + an unfolded polypeptide.. Together with its co-chaperonin GroES, plays an essential role in assisting protein folding. The GroEL-GroES system forms a nano-cage that allows encapsulation of the non-native substrate proteins and provides a physical environment optimized to promote and accelerate protein folding. The protein is Chaperonin GroEL 1 of Corynebacterium diphtheriae (strain ATCC 700971 / NCTC 13129 / Biotype gravis).